A 779-amino-acid chain; its full sequence is Endonuclease MutS2 (779 aa).

328–335 is a binding site for ATP; it reads GPNTGGKT. Residues 704 to 779 form the Smr domain; sequence LDLRGKRYEE…GSGATIVTLG (76 aa).

The protein belongs to the DNA mismatch repair MutS family. MutS2 subfamily. As to quaternary structure, homodimer. Binds to stalled ribosomes, contacting rRNA.

Its function is as follows. Endonuclease that is involved in the suppression of homologous recombination and thus may have a key role in the control of bacterial genetic diversity. Functionally, acts as a ribosome collision sensor, splitting the ribosome into its 2 subunits. Detects stalled/collided 70S ribosomes which it binds and splits by an ATP-hydrolysis driven conformational change. Acts upstream of the ribosome quality control system (RQC), a ribosome-associated complex that mediates the extraction of incompletely synthesized nascent chains from stalled ribosomes and their subsequent degradation. Probably generates substrates for RQC. The protein is Endonuclease MutS2 of Streptococcus pyogenes serotype M18 (strain MGAS8232).